Reading from the N-terminus, the 102-residue chain is Circadian clock oscillator protein KaiB (102 aa).

The protein belongs to the KaiB family. As to quaternary structure, undergoes a major conformational rearrangment; in the free state forms homotetramers with 2 dimers. When bound to the CI domain of KaiC switches to a monomeric thioredoxin-fold (KaiB(fs)). Monomers, homodimers and homotetramers are detected in solution; at low concentrations only monomers are seen. In vitro forms KaiC(6):KaiB(1) and KaiC(6):KaiB(6) complexes. Only associates with 'Ser-431'-phosphorylated KaiC (and not with doubly phosphorylated KaiC). Complex formation between KaiB and KaiC is regulated by the phosphorylation state of KaiC and by an ATP hydrolysis-driven conformation change in the CI ring of KaiC; complex formation is slow. Slow complex formation is crucial for the timing of the circadian period. In low resolution cryo-EM forms a KaiC(6):KaiB(6) complex. The KaiABC complex composition changes during the circadian cycle to control KaiC phosphorylation. Complexes KaiC(6), KaiA(2-4):KaiC(6), KaiB(6):KaiC(6) and KaiC(6):KaiB(6):KaiA(12) are among the most important forms, many form cooperatively. The KaiB:KaiC complex is more prevalent at 16 hours (in the dark) than at 4 hours (in the light) in the circadian cycle. The KaiA:KaiB complex is only found at 20-24 hours in the circadian cycle (subjective night). Binds to the CI domain of KaiC; SasA and KaiB compete to bind to the CI domain.

It is found in the cytoplasm. Its subcellular location is the cell membrane. Key component of the KaiABC oscillator complex, which constitutes the main circadian regulator in cyanobacteria. Complex composition changes during the circadian cycle to control KaiC phosphorylation. KaiA stimulates KaiC autophosphorylation, while KaiB sequesters KaiA, leading to KaiC autodephosphorylation. KaiA binding to the KaiC CII domain yields KaiA(2-4):KaiC(6) complexes which stimulate KaiC autophosphorylation. Phospho-Ser-431 KaiC accumulation triggers binding of KaiB to form the KaiB(6):KaiC(6) complex, leading to changes in the output regulators CikA and SasA. KaiB switches to a thioredoxin-like fold (KaiB(fs)) in complex with KaiC. KaiB(6):KaiC(6) formation exposes a site for KaiA binding that sequesters KaiA from the CII domain, making the KaiC(6):KaiB(6):KaiA(12) complex that results in KaiC autodephosphorylation. Complete dephosphorylation of KaiC leads to dissociation of KaiA(2):KaiB(1), completing 1 cycle of the Kai oscillator. Its function is as follows. Circadian oscillations can be generated in vitro by incubating KaiA, KaiB and KaiC with 1 mM ATP. The cycle is self-sustainable for at least 3 cycles and resistant to temperature changes. A very robust clock is reconstituted with KaiA, KaiB, KaiC, SasA, CikA and RpaA; output is measured by transcription from an appropriate reporter. In terms of biological role, a metamorphic protein which reversibly switches between an inactive tetrameric fold and a rare, thioredoxin-like monomeric fold (KaiB(fs)). KaiB(fs) binds phospho-KaiC, KaiA and CikA. KaiA and CikA compete for binding to KaiB(fs), and KaiB(fs) and SasA compete for binding to KaiC, thus the clock oscillator and output signal pathway are tightly coupled. This is Circadian clock oscillator protein KaiB from Synechococcus elongatus (strain ATCC 33912 / PCC 7942 / FACHB-805) (Anacystis nidulans R2).